Reading from the N-terminus, the 150-residue chain is Cell division protein SepF (150 aa).

A disordered region spans residues 26–45; the sequence is DREEIPEEHESKDRTAYQSK.

This sequence belongs to the SepF family. Homodimer. Interacts with FtsZ.

It is found in the cytoplasm. Functionally, cell division protein that is part of the divisome complex and is recruited early to the Z-ring. Probably stimulates Z-ring formation, perhaps through the cross-linking of FtsZ protofilaments. Its function overlaps with FtsA. The chain is Cell division protein SepF from Bacillus licheniformis (strain ATCC 14580 / DSM 13 / JCM 2505 / CCUG 7422 / NBRC 12200 / NCIMB 9375 / NCTC 10341 / NRRL NRS-1264 / Gibson 46).